Consider the following 240-residue polypeptide: Transmembrane emp24 domain-containing protein 6 (240 aa).

An N-terminal signal peptide occupies residues 1 to 21 (MFPLLFVAGLVVLNLVSSARS). At 22–200 (QKTEPLSGTG…FFLLQSNYNY (179 aa)) the chain is on the lumenal side. One can recognise a GOLD domain in the interval 53–138 (TECFWQFAHQ…SVQVYLNFGV (86 aa)). Residues N107 and N156 are each glycosylated (N-linked (GlcNAc...) asparagine). A helical membrane pass occupies residues 201–223 (VNWWSTAQSLVIVLSGILQLYFL). At 224 to 240 (KRLFNTPMTTETQKPRC) the chain is on the cytoplasmic side.

The protein belongs to the EMP24/GP25L family.

It is found in the endoplasmic reticulum membrane. In Bos taurus (Bovine), this protein is Transmembrane emp24 domain-containing protein 6 (TMED6).